The following is a 320-amino-acid chain: Adenosine receptor A3 (320 aa).

Residues 1–16 (MKANNTTTSALWLQIT) lie on the Extracellular side of the membrane. 2 N-linked (GlcNAc...) asparagine glycosylation sites follow: Asn-4 and Asn-5. Residues 17–39 (YITMEAAIGLCAVVGNMLVIWVV) traverse the membrane as a helical segment. Residues 40 to 50 (KLNRTLRTTTF) lie on the Cytoplasmic side of the membrane. A helical transmembrane segment spans residues 51–74 (YFIVSLALADIAVGVLVIPLAIAV). The Extracellular portion of the chain corresponds to 75 to 86 (SLEVQMHFYACL). Cys-85 and Cys-168 are oxidised to a cystine. The chain crosses the membrane as a helical span at residues 87-108 (FMSCVLLVFTHASIMSLLAIAV). Residues 109–128 (DRYLRVKLTVRYRTVTTQRR) lie on the Cytoplasmic side of the membrane. A helical transmembrane segment spans residues 129 to 150 (IWLFLGLCWLVSFLVGLTPMFG). The Extracellular portion of the chain corresponds to 151–179 (WNRKVTLELSQNSSTLSCHFRSVVGLDYM). Residues 180 to 200 (VFFSFITWILIPLVVMCIIYL) traverse the membrane as a helical segment. Residues 201-233 (DIFYIIRNKLSQNLTGFRETRAFYGREFKTAKS) are Cytoplasmic-facing. Residues 234 to 257 (LFLVLFLFALCWLPLSIINFVSYF) form a helical membrane-spanning segment. The Extracellular segment spans residues 258-263 (NVKIPE). The helical transmembrane segment at 264–286 (IAMCLGILLSHANSMMNPIVYAC) threads the bilayer. Residues 287–320 (KIKKFKETYFVILRACRLCQTSDSLDSNLEQTTE) are Cytoplasmic-facing. A lipid anchor (S-palmitoyl cysteine) is attached at Cys-305. Phosphothreonine occurs at positions 307, 318, and 319.

This sequence belongs to the G-protein coupled receptor 1 family. Phosphorylation on Thr-318 and Thr-319 may be crucial for rapid desensitization. Phosphorylation on Thr-318 may be necessary for phosphorylation on Thr-319 to occur. Testis, particularly in spermatocytes and spermatids but not in spermatogonia. Low levels in the brain.

It is found in the cell membrane. In terms of biological role, receptor for adenosine. The activity of this receptor is mediated by G proteins which inhibits adenylyl cyclase. May play a role during reproduction. The chain is Adenosine receptor A3 (Adora3) from Rattus norvegicus (Rat).